The following is a 109-amino-acid chain: Synaptobrevin-1 (109 aa).

Residues 1 to 26 (MDAQGDAGAQGGSQGGPRPSNKRLQQ) are disordered. Residues 1 to 86 (MDAQGDAGAQ…KRKYWWKNIK (86 aa)) are Cytoplasmic-facing. The v-SNARE coiled-coil homology domain occupies 23–83 (RLQQTQAQVD…ATLKRKYWWK (61 aa)). A helical; Anchor for type IV membrane protein transmembrane segment spans residues 87–107 (MMIIMCAIVVILIIIIVLWAG). Residues 108–109 (GK) lie on the Extracellular side of the membrane.

The protein belongs to the synaptobrevin family. Part of the SNARE core complex containing ric-4/SNAP25, snb-1/VAMP2 and unc-64/STX1A. This complex binds to cpx-1/CPLX1. As to expression, expressed in the nervous system notably the nerve ring, ventral cord and dorsal cord.

It is found in the cytoplasmic vesicle. Its subcellular location is the secretory vesicle. The protein localises to the synaptic vesicle membrane. It localises to the cell membrane. The protein resides in the synapse. It is found in the synaptosome. In terms of biological role, involved in the targeting and/or fusion of transport vesicles to their target membrane. Acts in neuronal exocytosis of synaptic transmission. Likely to have a role in cholinergic transmisson. Required for viability, coordinated movement and M3 pharynx motor neuron function. This Caenorhabditis elegans protein is Synaptobrevin-1.